Consider the following 397-residue polypeptide: MKRIYVVGTADTKGEELAFLADAIAATGAAVSRVDVGTRDATIPVDISANDIAGHHPGGRDAVLGGNDRGAAVAAMGVAFARFAQSRNDIAAMIGIGGGGGTSIVTSGMRALPLGLPKIMVSTLASGDTAPYVDVSDIIMMPSVTDMAGLNRLSRVVLHNAAQAIAGMAARPAPPPDGKPSIGLTMFGVTTPCVTTIADALRSTYDCMVFHATGTGGRSMEKLADSGLLSGVIDITTTEVCDLLLGGVLPATEDRFGAIARTGLPYVGSVGALDMVNFWAPSTVPERYRGRLFYEHNPNVTLMRTSADECRAIGEWIGTRLALCDGPVHFLIPEKGVSALDIEGGTFFDREADAVLFEAIERTIKPNANRRVTRLPLHINDPEFAKAVAAFLDIARH.

It belongs to the UPF0261 family.

The sequence is that of UPF0261 protein mlr3387 from Mesorhizobium japonicum (strain LMG 29417 / CECT 9101 / MAFF 303099) (Mesorhizobium loti (strain MAFF 303099)).